Reading from the N-terminus, the 338-residue chain is Glyceraldehyde-3-phosphate dehydrogenase (338 aa).

NAD(+)-binding positions include 12–13 (RI), aspartate 34, and arginine 79. D-glyceraldehyde 3-phosphate contacts are provided by residues 150 to 152 (SCT), threonine 181, 210 to 211 (TG), and arginine 233. Cysteine 151 acts as the Nucleophile in catalysis. Asparagine 316 serves as a coordination point for NAD(+).

It belongs to the glyceraldehyde-3-phosphate dehydrogenase family. Homotetramer.

The protein localises to the cytoplasm. The enzyme catalyses D-glyceraldehyde 3-phosphate + phosphate + NAD(+) = (2R)-3-phospho-glyceroyl phosphate + NADH + H(+). The protein operates within carbohydrate degradation; glycolysis; pyruvate from D-glyceraldehyde 3-phosphate: step 1/5. The protein is Glyceraldehyde-3-phosphate dehydrogenase (GPD) of Phaffia rhodozyma (Yeast).